A 584-amino-acid chain; its full sequence is Negative regulator of RAS-cAMP pathway (584 aa).

Thr25 is subject to Phosphothreonine. 5 disordered regions span residues 95 to 167 (PIKP…STTS), 209 to 279 (PLQS…SKTS), 291 to 320 (SEDE…DDYN), 343 to 366 (NLDS…HDPV), and 381 to 432 (SNSN…SLKT). Polar residues-rich tracts occupy residues 114–127 (PPTT…TRPM), 229–254 (CIDN…SFPQ), and 267–278 (NDQNGQLSLSKT). Ser247 and Ser276 each carry phosphoserine. Residues 307 to 320 (FYADEDDEEYDDYN) are compositionally biased toward acidic residues. The segment covering 343 to 363 (NLDSTKSSVSSANTINSNTSH) has biased composition (polar residues). The span at 381–392 (SNSNNHNTAHSE) shows a compositional bias: low complexity. The segment covering 398–432 (VSPTPQSSHSNIGPQPQQNPPSANGIKQQKPSLKT) has biased composition (polar residues). Ser442 is modified (phosphoserine). Ser518 carries the post-translational modification Phosphoserine; by PKA. The interval 551 to 584 (DNTSIANSNGNGNDDTSNQRTEALGRKTSNGGRI) is disordered. Residues 557–568 (NSNGNGNDDTSN) show a composition bias toward low complexity.

The protein localises to the nucleus. In terms of biological role, negative regulator of Ras-cAMP pathway. Involved in transcriptional regulation of galactose-inducible genes. The polypeptide is Negative regulator of RAS-cAMP pathway (MKS1) (Saccharomyces cerevisiae (strain ATCC 204508 / S288c) (Baker's yeast)).